The chain runs to 1038 residues: Dorsal-ventral patterning protein Sog (1038 aa).

Over 1-53 the chain is Cytoplasmic; sequence MANKLRKSNAIEWATATGTVPLLERSCCHSEDAALEPQASKTSHREQAPILRH. A helical; Signal-anchor for type II membrane protein transmembrane segment spans residues 54 to 74; that stretch reads LSQLSHLLIIAGLLIVCLAGV. Topologically, residues 75–1038 are extracellular; that stretch reads TEGRRHAPLM…QPHHQQRSSS (964 aa). In terms of domain architecture, VWFC 1 spans 100-175; sequence TECQFGKVLR…LPGKCCKTCP (76 aa). Residues N179 and N287 are each glycosylated (N-linked (GlcNAc...) asparagine). CHRD domains lie at 197–337, 339–471, 474–588, and 592–713; these read NMKH…KYTA, QTEL…TRAS, IFQT…PRPV, and RDSA…STKV. N-linked (GlcNAc...) asparagine glycans are attached at residues N520, N666, N752, and N821. Residues 742–804 form the VWFC 2 domain; the sequence is TKCFHSGRFY…RDGECCPSCV (63 aa). 2 VWFC domains span residues 830–899 and 939–1020; these read RGCR…KICP and GGCK…TQCR.

Belongs to the chordin family. Component of a complex composed of dpp, sog and tsg. Interacts with palmitoyltransferase Hip14. Post-translationally, palmitoylated, probably by Hip14. In terms of processing, cleaved by metalloproteases tok and tld. Cleavage by tok during pupal development contributes to specification of the posterior crossvein in the wing. In terms of tissue distribution, abuts the dorsal dpp-expressing cells in a lateral stripe 14-16 cells wide. Later in embryogenesis it is expressed in neuroectoderm and in the endoderm spaced along the anterior-posterior axis of the developing gut.

The protein resides in the golgi apparatus membrane. It is found in the cell membrane. It localises to the secreted. Putative negative growth factor. Antagonist of dpp, a protein involved in patterning the dorsal region and in the development of the neuroectoderm; dpp inhibition is enhanced by tsg. Required for establishment of a narrow stripe of peak levels of BMP signaling in the dorsal midline of early embryos, that will give rise to the amnioserosa. During pupal development, plays a role in specification of the posterior crossvein in the wing. Exhibits both agonist and antagonist activities towards BMP signaling during pupal wing patterning. In Drosophila melanogaster (Fruit fly), this protein is Dorsal-ventral patterning protein Sog (sog).